The primary structure comprises 217 residues: 3,4-dihydroxy-2-butanone 4-phosphate synthase (217 aa).

Residues 37–38, D42, 150–154, and E174 contribute to the D-ribulose 5-phosphate site; these read RE and RGGHT. E38 contacts Mg(2+). H153 contributes to the Mg(2+) binding site.

Belongs to the DHBP synthase family. As to quaternary structure, homodimer. Mg(2+) is required as a cofactor. Requires Mn(2+) as cofactor.

It carries out the reaction D-ribulose 5-phosphate = (2S)-2-hydroxy-3-oxobutyl phosphate + formate + H(+). It functions in the pathway cofactor biosynthesis; riboflavin biosynthesis; 2-hydroxy-3-oxobutyl phosphate from D-ribulose 5-phosphate: step 1/1. Its function is as follows. Catalyzes the conversion of D-ribulose 5-phosphate to formate and 3,4-dihydroxy-2-butanone 4-phosphate. The sequence is that of 3,4-dihydroxy-2-butanone 4-phosphate synthase from Escherichia coli O17:K52:H18 (strain UMN026 / ExPEC).